A 288-amino-acid chain; its full sequence is Protein PXR1 (288 aa).

One can recognise a G-patch domain in the interval 25–72; it reads QSRFGHKHLMRFGWQPGQGLGTQPVQSMKTHIKVSIKDDNLGLGAKLK. The disordered stretch occupies residues 147–258; sequence SYSQMEKDSS…TSIPESVSTR (112 aa). Residues 157 to 166 are compositionally biased toward acidic residues; it reads SDEESDDDED. Composition is skewed to basic residues over residues 169–185 and 195–214; these read KKHK…KKRK and KKKK…KDKK. Low complexity predominate over residues 238–256; that stretch reads RTASIESSTSATSIPESVS.

Belongs to the PINX1 family.

Its subcellular location is the nucleus. It localises to the nucleolus. Its function is as follows. Involved in rRNA-processing at A0, A1 and A2 sites and negatively regulates telomerase. In Candida glabrata (strain ATCC 2001 / BCRC 20586 / JCM 3761 / NBRC 0622 / NRRL Y-65 / CBS 138) (Yeast), this protein is Protein PXR1 (PXR1).